The primary structure comprises 90 residues: Acylphosphatase (90 aa).

Residues 3–90 enclose the Acylphosphatase-like domain; that stretch reads RVLIKLTGKV…DIYLDFSIVR (88 aa). Residues R18 and N36 contribute to the active site.

This sequence belongs to the acylphosphatase family.

The enzyme catalyses an acyl phosphate + H2O = a carboxylate + phosphate + H(+). The polypeptide is Acylphosphatase (acyP) (Shewanella oneidensis (strain ATCC 700550 / JCM 31522 / CIP 106686 / LMG 19005 / NCIMB 14063 / MR-1)).